The following is a 369-amino-acid chain: Transmembrane protein 198 (369 aa).

The next 7 membrane-spanning stretches (helical) occupy residues 37–57, 60–80, 93–113, 117–137, 148–168, 181–201, and 216–236; these read VVPS…CFFG, CFKA…IFLL, VEAS…VTML, VGLF…TLIG, SVWV…VLTL, VFGA…FALV, and VCWT…LGVL. The disordered stretch occupies residues 266–308; that stretch reads RQKEERRESSRKKKRKQPQSAQHTHAAKALHPEPAYRRKPNPI.

This sequence belongs to the TMEM198 family.

The protein localises to the membrane. The sequence is that of Transmembrane protein 198 (tmem198ab) from Danio rerio (Zebrafish).